The following is a 288-amino-acid chain: Energy-coupling factor transporter ATP-binding protein EcfA2 (288 aa).

The 244-residue stretch at 3–246 (ITFDHVSFTY…PAWLKANQLG (244 aa)) folds into the ABC transporter domain. An ATP-binding site is contributed by 40 to 47 (GHTGSGKS). The active-site Proton acceptor is Glu-171.

This sequence belongs to the ABC transporter superfamily. Energy-coupling factor EcfA family. Forms a stable energy-coupling factor (ECF) transporter complex probably composed of 2 membrane-embedded substrate-binding proteins (S component), 2 ATP-binding proteins (A component) and 2 transmembrane proteins (T component). This complex interacts with a number of substrate-specific components, including FolT and ThiT for 5-formyltetrahydrofolate and thiamine respectively.

Its subcellular location is the cell membrane. ATP-binding (A) component of a common energy-coupling factor (ECF) ABC-transporter complex. Unlike classic ABC transporters this ECF transporter provides the energy necessary to transport a number of different substrates including 5-formyltetrahydrofolate and thiamine. Expression of the complex plus FolT or ThiT in Lactococcus lactis subsp. cremoris (strain NZ9000) allows 5-formyltetrahydrofolate or thiamine uptake respectively; 5-formyltetrahydrofolate or thiamine are not taken up in the absence of FolT/ThiT or the EcfA1A2T complex. Deenergized L.lactis subsp. cremoris (treated with 2-deoxyglucose) do not take up substrate. The polypeptide is Energy-coupling factor transporter ATP-binding protein EcfA2 (Lacticaseibacillus paracasei (strain ATCC 334 / BCRC 17002 / CCUG 31169 / CIP 107868 / KCTC 3260 / NRRL B-441) (Lactobacillus paracasei)).